The chain runs to 534 residues: 5'-nucleotidase domain-containing protein 3 (534 aa).

The active-site Nucleophile is Asp-104. Mg(2+) is bound by residues Asp-104 and Asp-106. Catalysis depends on Asp-106, which acts as the Proton donor. Residue 234–242 (KEAIRDVHV) participates in substrate binding. Asp-372 contributes to the Mg(2+) binding site.

The protein belongs to the 5'(3')-deoxyribonucleotidase family. Mg(2+) serves as cofactor.

The chain is 5'-nucleotidase domain-containing protein 3 (nt5dc3) from Xenopus tropicalis (Western clawed frog).